A 122-amino-acid polypeptide reads, in one-letter code: Ribosomal protein eL22-like (122 aa).

A phosphoserine mark is found at Ser-112, Ser-118, and Ser-120.

Belongs to the eukaryotic ribosomal protein eL22 family.

This Homo sapiens (Human) protein is Ribosomal protein eL22-like (RPL22L1).